A 247-amino-acid polypeptide reads, in one-letter code: ATP synthase subunit a, chloroplastic (247 aa).

The next 5 membrane-spanning stretches (helical) occupy residues 38 to 58 (QVLITSWVVIAILLGSVIIAV), 95 to 115 (VPFIGTMFLFIFVSNWSGALL), 133 to 153 (DINTTVALALPTSVAYFYAGL), 199 to 219 (LVVVVLVSLVPSVVPIPVMFL), and 220 to 240 (GLFTSGIQALIFATLAAAYIG).

This sequence belongs to the ATPase A chain family. F-type ATPases have 2 components, CF(1) - the catalytic core - and CF(0) - the membrane proton channel. CF(1) has five subunits: alpha(3), beta(3), gamma(1), delta(1), epsilon(1). CF(0) has four main subunits: a, b, b' and c.

It is found in the plastid. It localises to the chloroplast thylakoid membrane. Functionally, key component of the proton channel; it plays a direct role in the translocation of protons across the membrane. The polypeptide is ATP synthase subunit a, chloroplastic (Phalaenopsis aphrodite subsp. formosana (Moth orchid)).